A 322-amino-acid polypeptide reads, in one-letter code: Beta-ketoacyl-[acyl-carrier-protein] synthase III (322 aa).

Catalysis depends on residues C113 and H249. An ACP-binding region spans residues 250–254 (QANVR). The active site involves N279.

The protein belongs to the thiolase-like superfamily. FabH family. As to quaternary structure, homodimer.

It is found in the cytoplasm. The enzyme catalyses malonyl-[ACP] + acetyl-CoA + H(+) = 3-oxobutanoyl-[ACP] + CO2 + CoA. Its pathway is lipid metabolism; fatty acid biosynthesis. Functionally, catalyzes the condensation reaction of fatty acid synthesis by the addition to an acyl acceptor of two carbons from malonyl-ACP. Catalyzes the first condensation reaction which initiates fatty acid synthesis and may therefore play a role in governing the total rate of fatty acid production. Possesses both acetoacetyl-ACP synthase and acetyl transacylase activities. Its substrate specificity determines the biosynthesis of branched-chain and/or straight-chain of fatty acids. This Anaplasma marginale (strain St. Maries) protein is Beta-ketoacyl-[acyl-carrier-protein] synthase III.